We begin with the raw amino-acid sequence, 480 residues long: Glutamate--tRNA ligase (480 aa).

The 'HIGH' region motif lies at 21–31 (PSPTGYLHVGG). Zn(2+) is bound by residues cysteine 110, cysteine 112, cysteine 137, and histidine 139. Positions 248–252 (KLSKR) match the 'KMSKS' region motif. Position 251 (lysine 251) interacts with ATP.

Belongs to the class-I aminoacyl-tRNA synthetase family. Glutamate--tRNA ligase type 1 subfamily. In terms of assembly, monomer. Requires Zn(2+) as cofactor.

The protein resides in the cytoplasm. The catalysed reaction is tRNA(Glu) + L-glutamate + ATP = L-glutamyl-tRNA(Glu) + AMP + diphosphate. Functionally, catalyzes the attachment of glutamate to tRNA(Glu) in a two-step reaction: glutamate is first activated by ATP to form Glu-AMP and then transferred to the acceptor end of tRNA(Glu). The chain is Glutamate--tRNA ligase from Histophilus somni (strain 129Pt) (Haemophilus somnus).